The sequence spans 446 residues: C-type lectin domain family 18 member C (446 aa).

The N-terminal stretch at 1 to 26 is a signal peptide; that stretch reads MLHPETSPGRGHLLAVLLALLGTAWA. An SCP domain is found at 52-182; it reads LSLHNRLRSW…AAIEAFVCAY (131 aa). Asn144 carries N-linked (GlcNAc...) asparagine glycosylation. In terms of domain architecture, EGF-like spans 228-261; it reads PRNPCRMSCQNHGRLNISTCHCHCPPGYTGRYCQ. 4 disulfide bridges follow: Cys236/Cys249, Cys251/Cys260, Cys327/Cys432, and Cys408/Cys424. Residues 306–433 enclose the C-type lectin domain; that stretch reads IDGDCFMVSS…CKTRNRYICQ (128 aa).

Detected in peripheral blood cells.

Its subcellular location is the secreted. The protein resides in the endoplasmic reticulum. It is found in the golgi apparatus. It localises to the endosome. Its function is as follows. Binds polysaccharidesin a Ca(2+)-independent manner with a preferentially binding to fucoidan, beta-glucans and galactans. The protein is C-type lectin domain family 18 member C (CLEC18C) of Homo sapiens (Human).